Here is a 464-residue protein sequence, read N- to C-terminus: MNTLLVGINVAVMLILVGVLYYMQRKHVSFNKRVFTALGVGILFGLILQFIYEPTSKVIIESNTWFGLIGNGYVKLLQMIVMPLILVSIISAFTKLQLTKNLGKISGLIIGILILTTGIAAAVGIAASAGFDVSATGLQQGDAESARLKLVEERFTSIEKTTIPDKLLELLPTNPFLDLTGARPTSTISVVIFAAFIGIAFIGVKRKYPEQAELFKKMLDAVYAIVMRMVTLILRLTPYGVLALMAKTVAGSDINAILKLGNFVLASYVALIVMFIIHLLLIALSGLNPIQYLKKVFPVLTFAFTSRSSAGAMPLNIEAQKEKLGISEGIANFAASFGVSIGQNGCAGIYPAMLAMMVAPTVGIDPLQPQFILTLIAVVAISSFGVAGVGGGATFAALIVLSTMNLPIGIVALVISVEPLIDMGRTALNVSGSMTAGLISSKWLGELDQDTYNQDDTKTGEIAS.

Transmembrane regions (helical) follow at residues 3–23 (TLLV…LYYM), 34–54 (VFTA…IYEP), 73–93 (YVKL…ISAF), 107–127 (GLII…GIAA), 184–204 (PTST…FIGV), 225–245 (IVMR…LALM), 263–283 (FVLA…LLIA), 347–367 (AGIY…IDPL), 371–391 (FILT…GVGG), and 395–415 (FAAL…ALVI).

This sequence belongs to the dicarboxylate/amino acid:cation symporter (DAACS) (TC 2.A.23) family.

It is found in the membrane. Functionally, mediates uptake of L-cystine, the oxidized form of L-cysteine. This Bacillus cereus (strain ATCC 14579 / DSM 31 / CCUG 7414 / JCM 2152 / NBRC 15305 / NCIMB 9373 / NCTC 2599 / NRRL B-3711) protein is L-cystine uptake protein TcyP.